The sequence spans 471 residues: Phosphatidylserine synthase 1 (471 aa).

Position 2 is an N-acetylalanine (A2). At 2 to 35 (ASCVGSRTLSKDDVNYRMHFRMINEQQVEDITID) the chain is on the cytoplasmic side. Residues 36 to 56 (FFYRPHTITLLSFTIVSLMYF) form a helical membrane-spanning segment. The Lumenal portion of the chain corresponds to 57–72 (AFTRDDSVPEDNIWRG). Residues 73–93 (ILSVIFFFLIISVLAFPNGPF) form a helical membrane-spanning segment. At 94 to 102 (TRPHPALWR) the chain is on the cytoplasmic side. Residues 103-123 (MVFGLSVLYFLFLVFLLFLNF) form a helical membrane-spanning segment. At 124–160 (EQVKSLMYWLDPNLRYATREADIMEYAVNCHVITWER) the chain is on the lumenal side. A helical membrane pass occupies residues 161-181 (IVSHFDIFAFGHFWGWAMKAL). Topologically, residues 182–186 (LIRSY) are cytoplasmic. The helical transmembrane segment at 187 to 207 (GLCWTISITWELTELFFMHLL) threads the bilayer. At 208–216 (PNFAECWWD) the chain is on the lumenal side. The chain crosses the membrane as a helical span at residues 217 to 237 (QVILDILLCNGGGIWLGMVVC). The Cytoplasmic portion of the chain corresponds to 238 to 286 (RFLEMRTYHWASFKDIHTTTGKIKRAVLQFTPASWTYVRWFDPKSSFQR). Residues 287-307 (VAGVYLFMIIWQLTELNTFFL) form a helical membrane-spanning segment. At 308-309 (KH) the chain is on the lumenal side. Residues 310-330 (IFVFQASHPLSWCRILFIGCI) traverse the membrane as a helical segment. At 331-355 (TAPTVRQYYAYLTDTQCKRVGTQCW) the chain is on the cytoplasmic side. Residues 356 to 376 (VFGVIGFLEAIVCIKFGQDLF) form a helical membrane-spanning segment. Residues 377 to 380 (SKTQ) are Lumenal-facing. A helical membrane pass occupies residues 381–401 (ILYVVFWLLCVAFTTFLCLYG). Residues 402–471 (MVWYAEHYGH…SKVTNGVGKK (70 aa)) are Cytoplasmic-facing. S417, S440, and S452 each carry phosphoserine. Residues 426-471 (ISWHHGKGSKGSEDSPPKHSSNNESHSSRRRNRHSKSKVTNGVGKK) are disordered. Positions 453 to 462 (SRRRNRHSKS) are enriched in basic residues.

The protein belongs to the phosphatidyl serine synthase family.

The protein localises to the endoplasmic reticulum membrane. The catalysed reaction is a 1,2-diacyl-sn-glycero-3-phosphoethanolamine + L-serine = a 1,2-diacyl-sn-glycero-3-phospho-L-serine + ethanolamine. It carries out the reaction a 1,2-diacyl-sn-glycero-3-phosphocholine + L-serine = a 1,2-diacyl-sn-glycero-3-phospho-L-serine + choline. It participates in phospholipid metabolism; phosphatidylserine biosynthesis. Its activity is regulated as follows. Inhibited by exogenous phosphatidylserine. Functionally, catalyzes a base-exchange reaction in which the polar head group of phosphatidylethanolamine (PE) or phosphatidylcholine (PC) is replaced by L-serine. Catalyzes mainly the conversion of phosphatidylcholine. Also converts, in vitro and to a lesser extent, phosphatidylethanolamine. This is Phosphatidylserine synthase 1 (PTDSS1) from Cricetulus griseus (Chinese hamster).